The following is a 569-amino-acid chain: Urease subunit beta (569 aa).

The region spanning glycine 131–phenylalanine 569 is the Urease domain. Residues histidine 136, histidine 138, and lysine 219 each contribute to the Ni(2+) site. Position 219 is an N6-carboxylysine (lysine 219). Histidine 221 is a substrate binding site. The Ni(2+) site is built by histidine 248 and histidine 274. Residue histidine 322 is the Proton donor of the active site. Position 362 (aspartate 362) interacts with Ni(2+).

Belongs to the metallo-dependent hydrolases superfamily. Urease alpha subunit family. In terms of assembly, heterohexamer of 3 UreA (alpha) and 3 UreB (beta) subunits. It depends on Ni cation as a cofactor. In terms of processing, carboxylation allows a single lysine to coordinate two nickel ions.

It is found in the cytoplasm. The enzyme catalyses urea + 2 H2O + H(+) = hydrogencarbonate + 2 NH4(+). Its pathway is nitrogen metabolism; urea degradation; CO(2) and NH(3) from urea (urease route): step 1/1. The sequence is that of Urease subunit beta from Helicobacter pylori (strain Shi470).